The chain runs to 267 residues: Diacetylchitobiose deacetylase (267 aa).

It belongs to the PIGL family. Homohexamer.

It is found in the cytoplasm. It carries out the reaction N,N'-diacetylchitobiose + H2O = beta-D-glucosaminyl-(1-&gt;4)-N-acetyl-D-glucosamine + acetate. It functions in the pathway glycan degradation; chitin degradation. In terms of biological role, deacylates the non-reducing end of diacetylchitobiose (GlcNAc2). Can also use N-acetylglucosamine (GlcNAc) and N-acetylchitotriose (GlcNAc3). Probably involved in chitin degradation. This is Diacetylchitobiose deacetylase (dac) from Thermococcus kodakarensis (strain ATCC BAA-918 / JCM 12380 / KOD1) (Pyrococcus kodakaraensis (strain KOD1)).